A 352-amino-acid polypeptide reads, in one-letter code: Phosphoribosylformylglycinamidine cyclo-ligase (352 aa).

It belongs to the AIR synthase family.

It localises to the cytoplasm. The enzyme catalyses 2-formamido-N(1)-(5-O-phospho-beta-D-ribosyl)acetamidine + ATP = 5-amino-1-(5-phospho-beta-D-ribosyl)imidazole + ADP + phosphate + H(+). Its pathway is purine metabolism; IMP biosynthesis via de novo pathway; 5-amino-1-(5-phospho-D-ribosyl)imidazole from N(2)-formyl-N(1)-(5-phospho-D-ribosyl)glycinamide: step 2/2. The polypeptide is Phosphoribosylformylglycinamidine cyclo-ligase (Pseudomonas putida (strain GB-1)).